The chain runs to 680 residues: Calcium-binding and coiled-coil domain-containing protein 1 (680 aa).

The interval 1–30 (MEESSLSRAPSRGGVNFLNVARTYIPNTKV) is p300 KIX-binding. The interval 1–190 (MEESSLSRAP…VQELEKALAA (190 aa)) is N-terminal AD (CTNNB1 binding site). S4 bears the Phosphoserine mark. The interaction with GATA1 stretch occupies residues 45–125 (SDWIGIFKVE…FQFREPRPMD (81 aa)). Coiled-coil stretches lie at residues 145-205 (KATV…YKGL), 232-339 (ELEE…AELE), and 417-514 (QSVE…ADEK). The tract at residues 501–680 (RKLEARLEKV…HTYTHTHTHA (180 aa)) is C-terminal AD (CTNNB1 binding site); interaction with CCAR1. Residues 511–606 (ADEKWSEDPA…DSEAEDEKSV (96 aa)) are disordered. The segment at 654–679 (WKECPICKERFPVHTQTHTYTHTHTH) adopts a UBZ1-type zinc-finger fold. Zn(2+) is bound by residues C657, C660, H675, and H679.

It belongs to the CALCOCO family. As to quaternary structure, part of a calphoglin complex consisting of CALCOCO1, PPA1 and PGM. Interacts with the bHLH-PAS domains of GRIP1, AHR and ARNT. Interacts with CTNNB1 via both its N- and C-terminal regions. Interacts with EP300. Interacts with CCAR1 (via N-terminus) and GATA1.

The protein localises to the cytoplasm. It localises to the nucleus. Functions as a coactivator for aryl hydrocarbon and nuclear receptors (NR). Recruited to promoters through its contact with the N-terminal basic helix-loop-helix-Per-Arnt-Sim (PAS) domain of transcription factors or coactivators, such as NCOA2. During ER-activation acts synergistically in combination with other NCOA2-binding proteins, such as EP300, CREBBP and CARM1. Involved in the transcriptional activation of target genes in the Wnt/CTNNB1 pathway. Functions as a secondary coactivator in LEF1-mediated transcriptional activation via its interaction with CTNNB1. Coactivator function for nuclear receptors and LEF1/CTNNB1 involves differential utilization of two different activation regions. In association with CCAR1 enhances GATA1- and MED1-mediated transcriptional activation from the gamma-globin promoter during erythroid differentiation of K562 erythroleukemia cells. Its function is as follows. Seems to enhance inorganic pyrophosphatase thus activating phosphogluomutase (PMG). Probably functions as a component of the calphoglin complex, which is involved in linking cellular metabolism (phosphate and glucose metabolism) with other core functions including protein synthesis and degradation, calcium signaling and cell growth. This Bos taurus (Bovine) protein is Calcium-binding and coiled-coil domain-containing protein 1 (CALCOCO1).